A 303-amino-acid chain; its full sequence is Coenzyme PQQ synthesis protein B (303 aa).

It belongs to the PqqB family.

It participates in cofactor biosynthesis; pyrroloquinoline quinone biosynthesis. In terms of biological role, may be involved in the transport of PQQ or its precursor to the periplasm. The sequence is that of Coenzyme PQQ synthesis protein B from Acinetobacter baumannii (strain AB0057).